The following is a 91-amino-acid chain: Progonadoliberin-1 (91 aa).

The signal sequence occupies residues 1–21 (MVVKTWMPWLLVSSVLSQGCC). Q22 carries the post-translational modification Pyrrolidone carboxylic acid. A Glycine amide modification is found at G31.

Belongs to the GnRH family. Expressed in the cell bodies of a cluster of neurons in the preoptic region.

It is found in the secreted. Stimulates the secretion of gonadotropins. The sequence is that of Progonadoliberin-1 (gnrh1) from Oryzias latipes (Japanese rice fish).